Reading from the N-terminus, the 144-residue chain is 3-hydroxyacyl-[acyl-carrier-protein] dehydratase FabZ (144 aa).

Histidine 51 is an active-site residue.

The protein belongs to the thioester dehydratase family. FabZ subfamily.

It localises to the cytoplasm. It carries out the reaction a (3R)-hydroxyacyl-[ACP] = a (2E)-enoyl-[ACP] + H2O. In terms of biological role, involved in unsaturated fatty acids biosynthesis. Catalyzes the dehydration of short chain beta-hydroxyacyl-ACPs and long chain saturated and unsaturated beta-hydroxyacyl-ACPs. The sequence is that of 3-hydroxyacyl-[acyl-carrier-protein] dehydratase FabZ from Clostridium botulinum (strain Okra / Type B1).